We begin with the raw amino-acid sequence, 110 residues long: UPF0122 protein Aflv_1766 (110 aa).

It belongs to the UPF0122 family.

Functionally, might take part in the signal recognition particle (SRP) pathway. This is inferred from the conservation of its genetic proximity to ftsY/ffh. May be a regulatory protein. The sequence is that of UPF0122 protein Aflv_1766 from Anoxybacillus flavithermus (strain DSM 21510 / WK1).